The sequence spans 67 residues: Large ribosomal subunit protein uL29 (67 aa).

The protein belongs to the universal ribosomal protein uL29 family.

This Heliobacterium modesticaldum (strain ATCC 51547 / Ice1) protein is Large ribosomal subunit protein uL29.